A 348-amino-acid polypeptide reads, in one-letter code: Peroxidase 40 (348 aa).

The signal sequence occupies residues 1–21 (MKNLFNLFLMFFFAMPILSLS). N-linked (GlcNAc...) asparagine glycosylation occurs at Asn-26. Disulfide bonds link Cys-59-Cys-139, Cys-92-Cys-97, Cys-145-Cys-344, and Cys-224-Cys-256. Catalysis depends on His-90, which acts as the Proton acceptor. Residues Asp-91, Val-94, Gly-96, Asp-98, and Ser-100 each coordinate Ca(2+). A disordered region spans residues 170–189 (GRKDSRTASKQAATNGLPSP). Residues 177-189 (ASKQAATNGLPSP) show a composition bias toward polar residues. A substrate-binding site is contributed by Pro-187. Residue Asn-190 is glycosylated (N-linked (GlcNAc...) asparagine). His-217 is a binding site for heme b. Thr-218 contacts Ca(2+). Residues Asp-269, Thr-272, and Asp-277 each contribute to the Ca(2+) site.

Belongs to the peroxidase family. Classical plant (class III) peroxidase subfamily. Heme b is required as a cofactor. Ca(2+) serves as cofactor.

It localises to the secreted. The enzyme catalyses 2 a phenolic donor + H2O2 = 2 a phenolic radical donor + 2 H2O. In terms of biological role, removal of H(2)O(2), oxidation of toxic reductants, biosynthesis and degradation of lignin, suberization, auxin catabolism, response to environmental stresses such as wounding, pathogen attack and oxidative stress. These functions might be dependent on each isozyme/isoform in each plant tissue. This is Peroxidase 40 (PER40) from Arabidopsis thaliana (Mouse-ear cress).